Consider the following 425-residue polypeptide: Polyribonucleotide 5'-hydroxyl-kinase Clp1 (425 aa).

Residues Glu-22, Lys-62, and 124 to 129 contribute to the ATP site; that span reads DVGKST.

Belongs to the Clp1 family. Clp1 subfamily. Component of the tRNA splicing endonuclease complex. Component of pre-mRNA cleavage complex II (CF-II).

Its subcellular location is the nucleus. The enzyme catalyses a 5'-end dephospho-2'-deoxyribonucleoside-DNA + ATP = a 5'-end 5'-phospho-2'-deoxyribonucleoside-DNA + ADP + H(+). It carries out the reaction a 5'-end dephospho-ribonucleoside-RNA + ATP = a 5'-end 5'-phospho-ribonucleoside-RNA + ADP + H(+). Functionally, polynucleotide kinase that can phosphorylate the 5'-hydroxyl groups of double-stranded RNA (dsRNA), single-stranded RNA (ssRNA), double stranded DNA (dsDNA) and double-stranded DNA:RNA hybrids. dsRNA is phosphorylated more efficiently than dsDNA, and the RNA component of a DNA:RNA hybrid is phosphorylated more efficiently than the DNA component. Plays a role in both tRNA splicing and mRNA 3'-end formation. Component of the tRNA splicing endonuclease complex: phosphorylates the 5'-terminus of the tRNA 3'-exon during tRNA splicing; this phosphorylation event is a prerequisite for the subsequent ligation of the two exon halves and the production of a mature tRNA. Its role in tRNA splicing and maturation is required for cerebellar development. Component of the pre-mRNA cleavage complex II (CF-II), which seems to be required for mRNA 3'-end formation. Also phosphorylates the 5'-terminus of exogenously introduced short interfering RNAs (siRNAs), which is a necessary prerequisite for their incorporation into the RNA-induced silencing complex (RISC). However, endogenous siRNAs and microRNAs (miRNAs) that are produced by the cleavage of dsRNA precursors by dicer1 already contain a 5'-phosphate group, so this protein may be dispensible for normal RNA-mediated gene silencing. The protein is Polyribonucleotide 5'-hydroxyl-kinase Clp1 of Gallus gallus (Chicken).